The primary structure comprises 197 residues: Holliday junction branch migration complex subunit RuvA (197 aa).

The domain I stretch occupies residues Met1–Leu64. Residues Thr65–Gly143 form a domain II region. The interval Lys144–Leu152 is flexible linker. The interval Leu152 to Ile197 is domain III.

Belongs to the RuvA family. Homotetramer. Forms an RuvA(8)-RuvB(12)-Holliday junction (HJ) complex. HJ DNA is sandwiched between 2 RuvA tetramers; dsDNA enters through RuvA and exits via RuvB. An RuvB hexamer assembles on each DNA strand where it exits the tetramer. Each RuvB hexamer is contacted by two RuvA subunits (via domain III) on 2 adjacent RuvB subunits; this complex drives branch migration. In the full resolvosome a probable DNA-RuvA(4)-RuvB(12)-RuvC(2) complex forms which resolves the HJ.

It localises to the cytoplasm. Functionally, the RuvA-RuvB-RuvC complex processes Holliday junction (HJ) DNA during genetic recombination and DNA repair, while the RuvA-RuvB complex plays an important role in the rescue of blocked DNA replication forks via replication fork reversal (RFR). RuvA specifically binds to HJ cruciform DNA, conferring on it an open structure. The RuvB hexamer acts as an ATP-dependent pump, pulling dsDNA into and through the RuvAB complex. HJ branch migration allows RuvC to scan DNA until it finds its consensus sequence, where it cleaves and resolves the cruciform DNA. This chain is Holliday junction branch migration complex subunit RuvA, found in Caldicellulosiruptor bescii (strain ATCC BAA-1888 / DSM 6725 / KCTC 15123 / Z-1320) (Anaerocellum thermophilum).